The sequence spans 278 residues: Small ribosomal subunit protein uS2 (278 aa).

Residues Ile233–Lys257 form a disordered region.

It belongs to the universal ribosomal protein uS2 family.

The chain is Small ribosomal subunit protein uS2 from Bacteroides thetaiotaomicron (strain ATCC 29148 / DSM 2079 / JCM 5827 / CCUG 10774 / NCTC 10582 / VPI-5482 / E50).